A 456-amino-acid polypeptide reads, in one-letter code: tRNA modification GTPase MnmE (456 aa).

Positions 23, 85, and 124 each coordinate (6S)-5-formyl-5,6,7,8-tetrahydrofolate. The region spanning 220–375 (GLRVLIFGKP…LVSAIQERFV (156 aa)) is the TrmE-type G domain. Asn-230 lines the K(+) pocket. GTP-binding positions include 230 to 235 (NVGKSS), 249 to 255 (TDIPGTT), and 274 to 277 (DTAG). Ser-234 provides a ligand contact to Mg(2+). Residues Thr-249, Ile-251, and Thr-254 each contribute to the K(+) site. Mg(2+) is bound at residue Thr-255. Position 456 (Lys-456) interacts with (6S)-5-formyl-5,6,7,8-tetrahydrofolate.

The protein belongs to the TRAFAC class TrmE-Era-EngA-EngB-Septin-like GTPase superfamily. TrmE GTPase family. As to quaternary structure, homodimer. Heterotetramer of two MnmE and two MnmG subunits. K(+) is required as a cofactor.

Its subcellular location is the cytoplasm. Functionally, exhibits a very high intrinsic GTPase hydrolysis rate. Involved in the addition of a carboxymethylaminomethyl (cmnm) group at the wobble position (U34) of certain tRNAs, forming tRNA-cmnm(5)s(2)U34. The polypeptide is tRNA modification GTPase MnmE (Syntrophotalea carbinolica (strain DSM 2380 / NBRC 103641 / GraBd1) (Pelobacter carbinolicus)).